The primary structure comprises 412 residues: Multifunctional CCA protein (412 aa).

The ATP site is built by Gly8 and Arg11. The CTP site is built by Gly8 and Arg11. Residues Glu21 and Asp23 each coordinate Mg(2+). The ATP site is built by Arg92, Arg138, and Arg141. The CTP site is built by Arg92, Arg138, and Arg141. Residues 227–328 (TGIHTMMTVA…IKLFYAIDVW (102 aa)) form the HD domain.

This sequence belongs to the tRNA nucleotidyltransferase/poly(A) polymerase family. Bacterial CCA-adding enzyme type 1 subfamily. As to quaternary structure, monomer. Can also form homodimers and oligomers. It depends on Mg(2+) as a cofactor. Ni(2+) is required as a cofactor.

It carries out the reaction a tRNA precursor + 2 CTP + ATP = a tRNA with a 3' CCA end + 3 diphosphate. The enzyme catalyses a tRNA with a 3' CCA end + 2 CTP + ATP = a tRNA with a 3' CCACCA end + 3 diphosphate. Catalyzes the addition and repair of the essential 3'-terminal CCA sequence in tRNAs without using a nucleic acid template. Adds these three nucleotides in the order of C, C, and A to the tRNA nucleotide-73, using CTP and ATP as substrates and producing inorganic pyrophosphate. tRNA 3'-terminal CCA addition is required both for tRNA processing and repair. Also involved in tRNA surveillance by mediating tandem CCA addition to generate a CCACCA at the 3' terminus of unstable tRNAs. While stable tRNAs receive only 3'-terminal CCA, unstable tRNAs are marked with CCACCA and rapidly degraded. The polypeptide is Multifunctional CCA protein (Baumannia cicadellinicola subsp. Homalodisca coagulata).